Consider the following 307-residue polypeptide: MLVYIAGSGAMGCRFGYQISKTNNDVILLDNWEDHINAIKENGLVVTGDVEETVKLPIMKPTEATQEADLIILFTKAMQLPQMLQDIKGIIGKETKVLCLLNGLGHEDVIRQYIPEHNILMGVTVWTAGLEGPGRAHLQGVGALNLQSMDPSNQEAGHQVADLLNEANLNATYDENVVPNIWRKACVNGTMNSTCALLDCTIGELFASEDGLKMVKEIIHEFVIVGQAEGVELNEEEITQYVMDTSVKAAHHYPSMHQDLVQNHRLTEIDFINGAVNTKGEKLGINTPYCRMITELVHAKEAVLNIQ.

Residues 7 to 12 (GSGAMG), Asn102, and Ala128 each bind NADP(+). Substrate is bound at residue Asn102. Residue Lys184 is the Proton donor of the active site. Residues Asn188, Asn192, and Ser255 each contribute to the substrate site. Glu268 contributes to the NADP(+) binding site.

It belongs to the ketopantoate reductase family.

The protein resides in the cytoplasm. The enzyme catalyses (R)-pantoate + NADP(+) = 2-dehydropantoate + NADPH + H(+). The protein operates within cofactor biosynthesis; (R)-pantothenate biosynthesis; (R)-pantoate from 3-methyl-2-oxobutanoate: step 2/2. Functionally, catalyzes the NADPH-dependent reduction of ketopantoate into pantoic acid. In Streptococcus pyogenes serotype M1, this protein is 2-dehydropantoate 2-reductase (apbA).